The following is a 272-amino-acid chain: Shikimate dehydrogenase (NADP(+)) (272 aa).

Residues 14–16 (SKS) and Thr-61 contribute to the shikimate site. Lys-65 serves as the catalytic Proton acceptor. Glu-77 serves as a coordination point for NADP(+). Shikimate-binding residues include Asn-86 and Asp-102. NADP(+) contacts are provided by residues 126-130 (GAGGA), 149-154 (NRTASR), and Met-213. Tyr-215 is a binding site for shikimate. Gly-237 lines the NADP(+) pocket.

The protein belongs to the shikimate dehydrogenase family. In terms of assembly, homodimer.

It catalyses the reaction shikimate + NADP(+) = 3-dehydroshikimate + NADPH + H(+). It participates in metabolic intermediate biosynthesis; chorismate biosynthesis; chorismate from D-erythrose 4-phosphate and phosphoenolpyruvate: step 4/7. Its function is as follows. Involved in the biosynthesis of the chorismate, which leads to the biosynthesis of aromatic amino acids. Catalyzes the reversible NADPH linked reduction of 3-dehydroshikimate (DHSA) to yield shikimate (SA). This Salmonella typhimurium (strain LT2 / SGSC1412 / ATCC 700720) protein is Shikimate dehydrogenase (NADP(+)).